A 248-amino-acid chain; its full sequence is mRNA-decapping protein OPG122 (248 aa).

Residues 45 to 227 (HKRVSVSAIL…IAKYALDTAK (183 aa)) form the Nudix hydrolase domain. The short motif at 125–147 (GGIPKRGENVPECLSREIKEEVN) is the Nudix box element.

This sequence belongs to the Nudix hydrolase family. In terms of assembly, interacts with the late transcription elongation factor VLTF-4/OPG110. Interacts with the late transcription factors VLTF-1. Mg(2+) is required as a cofactor. Mn(2+) serves as cofactor.

It localises to the host mitochondrion. Acts with RNA polymerase to initiate transcription from late gene promoters. In Cynomys gunnisoni (Gunnison's prairie dog), this protein is mRNA-decapping protein OPG122 (OPG122).